The primary structure comprises 801 residues: Cation/H(+) antiporter 7 (801 aa).

Transmembrane regions (helical) follow at residues 58-78 (PNLE…EILF), 83-103 (IPIP…LFSY), 128-148 (GAFG…VGML), 154-174 (RAAL…YILM), 192-212 (EIIL…LTDL), 223-243 (VQSC…GTVL), 254-274 (IVIV…MLWI), 287-307 (VYIY…LNFF), 312-332 (YGWF…SALI), 340-360 (VGVL…ISWL), 377-397 (AISV…ITAF), 407-427 (IVLA…LGYI), and 438-458 (FTIA…AIEF).

It belongs to the monovalent cation:proton antiporter 2 (CPA2) transporter (TC 2.A.37) family. CHX (TC 2.A.37.4) subfamily. In terms of tissue distribution, expressed in pollen.

It localises to the membrane. In terms of biological role, may operate as a cation/H(+) antiporter. The chain is Cation/H(+) antiporter 7 (CHX7) from Arabidopsis thaliana (Mouse-ear cress).